Reading from the N-terminus, the 577-residue chain is Autophagy-related protein 20 (577 aa).

The segment at 57–81 (GQSYVAPHSGGGRTSSGSSSSASLQ) is disordered. Positions 95–239 (GEQGRVRILE…DFLDPNNANW (145 aa)) constitute a PX domain. Positions 131, 133, 157, and 205 each coordinate a 1,2-diacyl-sn-glycero-3-phospho-(1D-myo-inositol-3-phosphate).

It belongs to the sorting nexin family.

The protein localises to the endosome membrane. It is found in the preautophagosomal structure membrane. Required for cytoplasm to vacuole transport (Cvt), pexophagy and mitophagy. Also involved in endoplasmic reticulum-specific autophagic process and is essential for the survival of cells subjected to severe ER stress. Functions in protein retrieval from the endocytic pathway. The sequence is that of Autophagy-related protein 20 (ATG20) from Eremothecium gossypii (strain ATCC 10895 / CBS 109.51 / FGSC 9923 / NRRL Y-1056) (Yeast).